Reading from the N-terminus, the 154-residue chain is Acidic phospholipase A2 1 (154 aa).

An N-terminal signal peptide occupies residues 1–19 (MHPAHLLVLLGVCVSLLGA). A propeptide spanning residues 20–27 (ARIPPLPL) is cleaved from the precursor. Cystine bridges form between cysteine 38/cysteine 104, cysteine 54/cysteine 153, cysteine 56/cysteine 72, cysteine 71/cysteine 132, cysteine 78/cysteine 125, cysteine 88/cysteine 118, and cysteine 111/cysteine 123. 3 residues coordinate Ca(2+): phenylalanine 55, glycine 57, and glycine 59. Histidine 75 is a catalytic residue. Aspartate 76 contributes to the Ca(2+) binding site. Residue aspartate 126 is part of the active site.

This sequence belongs to the phospholipase A2 family. Group I subfamily. D49 sub-subfamily. In terms of assembly, monomer. Requires Ca(2+) as cofactor. In terms of tissue distribution, expressed by the venom gland.

The protein localises to the secreted. It catalyses the reaction a 1,2-diacyl-sn-glycero-3-phosphocholine + H2O = a 1-acyl-sn-glycero-3-phosphocholine + a fatty acid + H(+). Snake venom phospholipase A2 (PLA2) that shows moderate enzymatic activity and exhibits procoagulant activity. PLA2 catalyzes the calcium-dependent hydrolysis of the 2-acyl groups in 3-sn-phosphoglycerides. This Pseudonaja textilis (Eastern brown snake) protein is Acidic phospholipase A2 1.